The following is an 833-amino-acid chain: Neuronal tyrosine-phosphorylated phosphoinositide-3-kinase adapter 1 (833 aa).

Disordered regions lie at residues 1–45 (MNLL…PGVR), 64–191 (PASQ…LQRL), 219–423 (VFRG…RELP), 645–674 (EEDG…PSGI), and 736–765 (HTPR…QPAR). The span at 8-25 (TKLEWRQHKEEEAKRSSS) shows a compositional bias: basic and acidic residues. The involved in CYFIP1- and NCKAP1-binding stretch occupies residues 76 to 181 (STMAPRSLSC…DESCAPAPSP (106 aa)). Basic residues predominate over residues 111-120 (PPAKPRRHPS). A compositionally biased stretch (polar residues) spans 162–171 (SPNTQLSVSF). Gly residues predominate over residues 220 to 239 (FRGGGRSGGGLAGPPLGSGG). Residues 248–257 (SDSEDSEAIY) show a composition bias toward acidic residues. The segment covering 275-285 (GPPPLTAPSPP) has biased composition (pro residues).

This sequence belongs to the NYAP family. As to quaternary structure, interacts with ACOT9, ARHGAP26 and PIK3R2. Interacts with components of the WAVE1 complex, CYFIP1 and NCKAP1; this interaction mediates PI3K-WAVE1 association and actin cytoskeleton remodeling. In terms of processing, phosphorylated on tyrosine residues by FYN upon stimulation with CNTN5. Phosphorylation begins at 14 dpc, reaches a peak during perinatal days in brain, then gradually decreases. As to expression, expressed predominantly in brain where it is present in the neurons, but not in astrocytes or oligodendrites.

Functionally, activates PI3K and concomitantly recruits the WAVE1 complex to the close vicinity of PI3K and regulates neuronal morphogenesis. This chain is Neuronal tyrosine-phosphorylated phosphoinositide-3-kinase adapter 1 (Nyap1), found in Mus musculus (Mouse).